Consider the following 842-residue polypeptide: Axin-1 (842 aa).

The tract at residues 1–75 (MSVKGKGFPL…LDLGYEPEGS (75 aa)) is disordered. A compositionally biased stretch (polar residues) spans 34–46 (TTDQRPFSHTYYS). The RGS domain occupies 88–211 (SLHSLLDDQD…LKSDIYLEYT (124 aa)). Disordered stretches follow at residues 218 to 242 (PKNY…PTLN), 277 to 297 (SHCA…PGTW), 316 to 344 (TSAN…DGIP), 414 to 451 (KRVR…NSRY), 482 to 532 (KTPG…AKVD), 543 to 562 (YHHV…DGES), 615 to 637 (KKAD…EDSE), 656 to 675 (HKKS…TELA), and 729 to 754 (RLEE…KNVS). Residues 316-339 (TSANDSEQQSMSSDADTMSLTDSS) show a composition bias toward polar residues. Positions 348–433 (LRKHYRREMQ…DGDVSSGPSV (86 aa)) are interaction with GSK3B. Positions 434-508 (ISHKLPSGPP…RSPDGHLSKT (75 aa)) are interaction with beta-catenin. Residues 543–552 (YHHVHHHGGV) are compositionally biased toward basic residues. The segment covering 615 to 626 (KKADLGKSESAS) has biased composition (basic and acidic residues). A DIX domain is found at 760–842 (CDNIVVAYYF…KIIGQVEKID (83 aa)).

Homodimer. Interacts with hwa; leading to promote the tankyrase-mediated degradation of axin1. Post-translationally, ADP-ribosylated by tankyrase tnks and tnks2. Poly-ADP-ribosylated protein is recognized by rnf146, followed by ubiquitination at 'Lys-48' and subsequent activation of the Wnt signaling pathway. In terms of processing, ubiquitinated by rnf146 when poly-ADP-ribosylated, leading to its degradation and subsequent activation of the Wnt signaling pathway.

It is found in the cytoplasm. Its subcellular location is the nucleus. The protein localises to the membrane. It localises to the cell membrane. In terms of biological role, component of the beta-catenin destruction complex required for regulating ctnnb1 levels through phosphorylation and ubiquitination, and modulating Wnt-signaling. Controls dorsoventral patterning via two opposing effects; down-regulates ctnnb1 to inhibit the Wnt signaling pathway and ventralize embryos, but also dorsalizes embryos by activating a Wnt-independent JNK signaling pathway. In Xenopus laevis (African clawed frog), this protein is Axin-1 (axin1).